A 518-amino-acid polypeptide reads, in one-letter code: 2-isopropylmalate synthase (518 aa).

The Pyruvate carboxyltransferase domain maps to 5–267 (VIIFDTTLRD…STNIKHKEIY (263 aa)). Residues D14, H202, H204, and N238 each coordinate Mn(2+). The interval 392–518 (SLSFFSVQSI…KLKTLKKVNN (127 aa)) is regulatory domain.

Belongs to the alpha-IPM synthase/homocitrate synthase family. LeuA type 1 subfamily. Homodimer. Mn(2+) serves as cofactor.

It is found in the cytoplasm. The catalysed reaction is 3-methyl-2-oxobutanoate + acetyl-CoA + H2O = (2S)-2-isopropylmalate + CoA + H(+). It functions in the pathway amino-acid biosynthesis; L-leucine biosynthesis; L-leucine from 3-methyl-2-oxobutanoate: step 1/4. Its function is as follows. Catalyzes the condensation of the acetyl group of acetyl-CoA with 3-methyl-2-oxobutanoate (2-ketoisovalerate) to form 3-carboxy-3-hydroxy-4-methylpentanoate (2-isopropylmalate). The chain is 2-isopropylmalate synthase from Buchnera aphidicola subsp. Schizaphis graminum (strain Sg).